Here is a 491-residue protein sequence, read N- to C-terminus: Ketol-acid reductoisomerase (NADP(+)) (491 aa).

Residues A15–S208 enclose the KARI N-terminal Rossmann domain. NADP(+) is bound by residues C45–Q48, R68, R76, S78, and D108–Q110. Residue H132 is part of the active site. An NADP(+)-binding site is contributed by G158. KARI C-terminal knotted domains lie at S209–E353 and Y354–M486. 4 residues coordinate Mg(2+): D217, E221, E389, and E393. S414 serves as a coordination point for substrate.

This sequence belongs to the ketol-acid reductoisomerase family. Requires Mg(2+) as cofactor.

The catalysed reaction is (2R)-2,3-dihydroxy-3-methylbutanoate + NADP(+) = (2S)-2-acetolactate + NADPH + H(+). The enzyme catalyses (2R,3R)-2,3-dihydroxy-3-methylpentanoate + NADP(+) = (S)-2-ethyl-2-hydroxy-3-oxobutanoate + NADPH + H(+). Its pathway is amino-acid biosynthesis; L-isoleucine biosynthesis; L-isoleucine from 2-oxobutanoate: step 2/4. It functions in the pathway amino-acid biosynthesis; L-valine biosynthesis; L-valine from pyruvate: step 2/4. In terms of biological role, involved in the biosynthesis of branched-chain amino acids (BCAA). Catalyzes an alkyl-migration followed by a ketol-acid reduction of (S)-2-acetolactate (S2AL) to yield (R)-2,3-dihydroxy-isovalerate. In the isomerase reaction, S2AL is rearranged via a Mg-dependent methyl migration to produce 3-hydroxy-3-methyl-2-ketobutyrate (HMKB). In the reductase reaction, this 2-ketoacid undergoes a metal-dependent reduction by NADPH to yield (R)-2,3-dihydroxy-isovalerate. In Christiangramia forsetii (strain DSM 17595 / CGMCC 1.15422 / KT0803) (Gramella forsetii), this protein is Ketol-acid reductoisomerase (NADP(+)).